Here is a 977-residue protein sequence, read N- to C-terminus: Probable RNA-dependent RNA polymerase 5 (977 aa).

The segment at 103-122 (EEMSVDSDAPSPKSLKSEDK) is disordered.

Belongs to the RdRP family.

The catalysed reaction is RNA(n) + a ribonucleoside 5'-triphosphate = RNA(n+1) + diphosphate. Functionally, probably involved in the RNA silencing pathway and required for the generation of small interfering RNAs (siRNAs). This is Probable RNA-dependent RNA polymerase 5 (RDR5) from Arabidopsis thaliana (Mouse-ear cress).